The primary structure comprises 101 residues: Interleukin-8 (101 aa).

The first 22 residues, 1–22, serve as a signal peptide directing secretion; it reads MTSKLAIALLAAFLLSAALCKA. Citrulline is present on R27. 2 disulfide bridges follow: C34–C61 and C36–C77.

It belongs to the intercrine alpha (chemokine CxC) family. Homodimer. Citrullination at Arg-27 prevents proteolysis, and dampens tissue inflammation, it also enhances leukocytosis, possibly through impaired chemokine clearance from the blood circulation.

Its subcellular location is the secreted. Its function is as follows. Chemotactic factor that mediates inflammatory response by attracting neutrophils, basophils, and T-cells to clear pathogens and protect the host from infection. Also plays an important role in neutrophil activation. Released in response to an inflammatory stimulus, exerts its effect by binding to the G-protein-coupled receptors CXCR1 and CXCR2, primarily found in neutrophils, monocytes and endothelial cells. G-protein heterotrimer (alpha, beta, gamma subunits) constitutively binds to CXCR1/CXCR2 receptor and activation by IL8 leads to beta and gamma subunits release from Galpha (GNAI2 in neutrophils) and activation of several downstream signaling pathways including PI3K and MAPK pathways. The sequence is that of Interleukin-8 (CXCL8) from Tursiops truncatus (Atlantic bottle-nosed dolphin).